A 288-amino-acid chain; its full sequence is Small ribosomal subunit protein uS3 (288 aa).

In terms of domain architecture, KH type-2 spans Val39 to Arg107. Positions Gly209 to Glu288 are disordered. Residues Pro219–Asp238 are compositionally biased toward basic and acidic residues. Over residues Ala277–Glu288 the composition is skewed to low complexity.

The protein belongs to the universal ribosomal protein uS3 family. As to quaternary structure, part of the 30S ribosomal subunit. Forms a tight complex with proteins S10 and S14.

Functionally, binds the lower part of the 30S subunit head. Binds mRNA in the 70S ribosome, positioning it for translation. The protein is Small ribosomal subunit protein uS3 of Acidovorax sp. (strain JS42).